Reading from the N-terminus, the 273-residue chain is Undecaprenyl-diphosphatase (273 aa).

A run of 7 helical transmembrane segments spans residues 45 to 65, 90 to 110, 116 to 136, 154 to 173, 190 to 210, 222 to 242, and 252 to 272; these read AKTFEVVIQLGSILAVVVMFW, LTLIHILLGMVPAVVLGLIFH, LFNPINVMYALVVGGVLLIAA, YRQAFMIGCFQCLALWPGFS, YAASEFSFLLAVPMMMGATAL, ADFPMFAVGFVTAFLVALVAI, and ISFIPFAIYRFIVAAAVYVVF.

This sequence belongs to the UppP family.

It is found in the cell inner membrane. It catalyses the reaction di-trans,octa-cis-undecaprenyl diphosphate + H2O = di-trans,octa-cis-undecaprenyl phosphate + phosphate + H(+). Functionally, catalyzes the dephosphorylation of undecaprenyl diphosphate (UPP). Confers resistance to bacitracin. This chain is Undecaprenyl-diphosphatase, found in Enterobacter sp. (strain 638).